A 773-amino-acid polypeptide reads, in one-letter code: Kelch domain-containing protein 7A (773 aa).

A helical membrane pass occupies residues 23–40; sequence VVLSAAALLLVTAAYKLY. Residue Asn61 is glycosylated (N-linked (GlcNAc...) asparagine). 2 disordered regions span residues 64 to 99 and 114 to 207; these read EALG…LDYS and SEEA…APNG. The residue at position 89 (Ser89) is a Phosphoserine. Residues 114–126 show a composition bias toward basic and acidic residues; the sequence is SEEATRKGSDESQ. N-linked (GlcNAc...) asparagine glycosylation occurs at Asn256. Residues 296-355 are disordered; that stretch reads KADSRPVPCPAALADAPSPGPGPEPLVTGAASRDEAANTAGGGASEAASPQPVASPSAPG. Kelch repeat units follow at residues 323–370, 488–534, 537–585, 586–628, and 631–673; these read TGAA…ENPE, KRLV…LCTL, YLFV…ALEG, HLYA…ATVC, and EIFV…AVNG. The span at 340–354 shows a compositional bias: low complexity; the sequence is SEAASPQPVASPSAP. Ser361 bears the Phosphoserine mark.

Its subcellular location is the membrane. In Mus musculus (Mouse), this protein is Kelch domain-containing protein 7A (Klhdc7a).